Reading from the N-terminus, the 215-residue chain is 3-dehydroquinate dehydratase (215 aa).

3-dehydroquinate is bound by residues 27 to 29 and Arg-54; that span reads ELR. His-112 (proton donor/acceptor) is an active-site residue. Lys-139 acts as the Schiff-base intermediate with substrate in catalysis. The 3-dehydroquinate site is built by Arg-176 and Gln-198.

The protein belongs to the type-I 3-dehydroquinase family. As to quaternary structure, homodimer.

It carries out the reaction 3-dehydroquinate = 3-dehydroshikimate + H2O. Its pathway is metabolic intermediate biosynthesis; chorismate biosynthesis; chorismate from D-erythrose 4-phosphate and phosphoenolpyruvate: step 3/7. In terms of biological role, involved in the third step of the chorismate pathway, which leads to the biosynthesis of aromatic amino acids. Catalyzes the cis-dehydration of 3-dehydroquinate (DHQ) and introduces the first double bond of the aromatic ring to yield 3-dehydroshikimate. This Pyrococcus abyssi (strain GE5 / Orsay) protein is 3-dehydroquinate dehydratase.